A 609-amino-acid polypeptide reads, in one-letter code: Isocitrate dehydrogenase kinase/phosphatase (609 aa).

ATP contacts are provided by residues 325–331 and lysine 346; that span reads APGIKGM. The active site involves aspartate 381.

Belongs to the AceK family.

The protein localises to the cytoplasm. The catalysed reaction is L-seryl-[isocitrate dehydrogenase] + ATP = O-phospho-L-seryl-[isocitrate dehydrogenase] + ADP + H(+). Its function is as follows. Bifunctional enzyme which can phosphorylate or dephosphorylate isocitrate dehydrogenase (IDH) on a specific serine residue. This is a regulatory mechanism which enables bacteria to bypass the Krebs cycle via the glyoxylate shunt in response to the source of carbon. When bacteria are grown on glucose, IDH is fully active and unphosphorylated, but when grown on acetate or ethanol, the activity of IDH declines drastically concomitant with its phosphorylation. This chain is Isocitrate dehydrogenase kinase/phosphatase, found in Acidovorax sp. (strain JS42).